Reading from the N-terminus, the 103-residue chain is MYAVIKTGGKQYKVAKGDSVFVEKLEVKPGDEVTFDEVILVNDGKSTKIGTPVVEGAKVVAKVEKQGKEKKVVTFKYKPKKHSHTKYGHRQPYTKVTIESIEA.

The protein belongs to the bacterial ribosomal protein bL21 family. As to quaternary structure, part of the 50S ribosomal subunit. Contacts protein L20.

Its function is as follows. This protein binds to 23S rRNA in the presence of protein L20. The protein is Large ribosomal subunit protein bL21 of Lactobacillus johnsonii (strain CNCM I-12250 / La1 / NCC 533).